The sequence spans 179 residues: MTQKVGVLAIQGGYQKHADMFKSLGVEVKLVKFNNDFDSIDRLVIPGGESTTLLNLLNKHQIFDKLYNFCSSKPVFGTCAGSIVLSKGEGYLNLLDLEVQRNAYGRQVDSFVADISFNDKNITGVFIRAPKFIVVGNQVDILSKYQDSPVLLRQANILVSSFHPELTQDPTIHEYFLAM.

Residue Gly-48–Ser-50 coordinates L-glutamine. Catalysis depends on Cys-79, which acts as the Nucleophile. L-glutamine contacts are provided by residues Arg-101 and Ile-127 to Arg-128. Active-site charge relay system residues include His-163 and Glu-165.

The protein belongs to the glutaminase PdxT/SNO family. In the presence of PdxS, forms a dodecamer of heterodimers. Only shows activity in the heterodimer.

It catalyses the reaction aldehydo-D-ribose 5-phosphate + D-glyceraldehyde 3-phosphate + L-glutamine = pyridoxal 5'-phosphate + L-glutamate + phosphate + 3 H2O + H(+). The catalysed reaction is L-glutamine + H2O = L-glutamate + NH4(+). It functions in the pathway cofactor biosynthesis; pyridoxal 5'-phosphate biosynthesis. Functionally, catalyzes the hydrolysis of glutamine to glutamate and ammonia as part of the biosynthesis of pyridoxal 5'-phosphate. The resulting ammonia molecule is channeled to the active site of PdxS. In Francisella tularensis subsp. novicida (strain U112), this protein is Pyridoxal 5'-phosphate synthase subunit PdxT.